A 473-amino-acid chain; its full sequence is Cucurbitadienol 11-hydroxylase (473 aa).

The chain crosses the membrane as a helical span at residues 4–24 (VVLGLATLFVAYYIHWINKWR). Cysteine 422 is a binding site for heme.

The protein belongs to the cytochrome P450 family. Requires heme as cofactor. In terms of tissue distribution, highly expressed in young fruits 15 days after anthesis (15-DAA). Also observed in roots.

It localises to the membrane. It carries out the reaction cucurbitadienol + 2 reduced [NADPH--hemoprotein reductase] + 2 O2 = 11-oxocucurbitadienol + 2 oxidized [NADPH--hemoprotein reductase] + 3 H2O + 2 H(+). It catalyses the reaction cucurbitadienol + reduced [NADPH--hemoprotein reductase] + O2 = 11-hydroxycucurbitadienol + oxidized [NADPH--hemoprotein reductase] + H2O + H(+). The enzyme catalyses 11-hydroxycucurbitadienol + reduced [NADPH--hemoprotein reductase] + O2 = 11-oxocucurbitadienol + oxidized [NADPH--hemoprotein reductase] + 2 H2O + H(+). The catalysed reaction is (24R)-24,25-dihydroxycucurbitadienol + reduced [NADPH--hemoprotein reductase] + O2 = mogrol + oxidized [NADPH--hemoprotein reductase] + H2O + H(+). Its pathway is secondary metabolite biosynthesis; terpenoid biosynthesis. Hydroxylase involved in the biosynthesis of cucurbitacin and mogroside tetracyclic triterpene natural products (e.g. siamenoside I and mogrosides IV, V and VI). Cucurbitacins have cytotoxic properties and exhibit deterrent taste as a defense barrier against herbivores. Mogrosides are nonsugar highly oxygenated compounds used as high-intensity zero-calorie sweeteners; they also possess pharmacological properties such as regulating immunity, lowering blood sugar and lipid levels, protecting the liver, and acting as antioxidants and antitumor agents. Catalyzes the oxidation of cucurbitadienol at the C-11 position to produce 11-oxocucurbitadienol, a possible biosynthetic intermediate from cucurbitadienol to mogrol. Also mediates the conversion of 24,25-dihydroxycucurbitadienol to mogrol. This is Cucurbitadienol 11-hydroxylase from Siraitia grosvenorii (Monk's fruit).